The chain runs to 149 residues: Placenta growth factor (149 aa).

Positions 1–18 (MPTVRLFTCFLQLLTGLV) are cleaved as a signal peptide. N-linked (GlcNAc...) asparagine glycosylation is present at Asn33. Intrachain disulfides connect Cys52-Cys94, Cys83-Cys128, and Cys87-Cys130. Residue Asn101 is glycosylated (N-linked (GlcNAc...) asparagine).

The protein belongs to the PDGF/VEGF growth factor family. Antiparallel homodimer; disulfide-linked. Also found as heterodimer with VEGFA/VEGF.

It is found in the secreted. Its function is as follows. Growth factor active in angiogenesis and endothelial cell growth, stimulating their proliferation and migration. It binds to the receptor FLT1/VEGFR-1. Also promotes cell tumor growth. This Bos taurus (Bovine) protein is Placenta growth factor (PGF).